The sequence spans 242 residues: Ribonuclease 3 2 (242 aa).

Positions 12–137 (LESLVRKLGL…VLGALYLSTS (126 aa)) constitute an RNase III domain. Mg(2+) is bound at residue Glu-51. Asp-55 is a catalytic residue. Positions 123 and 126 each coordinate Mg(2+). Glu-126 is an active-site residue. The DRBM domain occupies 165–235 (NYKAALQEWT…AKVAFLAITP (71 aa)).

The protein belongs to the ribonuclease III family. As to quaternary structure, homodimer. Requires Mg(2+) as cofactor.

Its subcellular location is the cytoplasm. It carries out the reaction Endonucleolytic cleavage to 5'-phosphomonoester.. Functionally, digests double-stranded RNA. Involved in the processing of primary rRNA transcript to yield the immediate precursors to the large and small rRNAs (23S and 16S). Processes some mRNAs, and tRNAs when they are encoded in the rRNA operon. Processes pre-crRNA and tracrRNA of type II CRISPR loci if present in the organism. In Nostoc sp. (strain PCC 7120 / SAG 25.82 / UTEX 2576), this protein is Ribonuclease 3 2 (rnc2).